The primary structure comprises 979 residues: MLEVLDMAPPRHQPAAGKAGGGRGHGHGHGHGGGGGGPAARKQPLQSSMAQPKAETAAATAAVAPPEGGKKCGGGGGRRRGGRGRGGRAGAGPGPGLAAAPAVVVAPAARAVIGPPVASKGLSFCRRPGFGTVGARCVVKANHFLAELPDKDLTQYDVKITPEVSSRSVNRAIMSELVRLYHDSDLGGRLPAYDGRKNLYTAGTLPFDAREFVVRLTDDDDGTGVPPREREYRVAIKFAARADLHHLRQFIAGRQADAPQEALQVLDIVLRELANRRYVSIGRSFYSPDIRKPQRLGDGLQSWCGFYQSIRPTQMGLSLNIDMSSTAFIEPLPVIEFVAQILGKDVISRPLSDANRIKIKKALRGVKVEVTHRGNVRRKYRISGLTTQPTHELIFPIDDQMNMKSVVEYFKEMYGFTIQHPHLPCLQVGNQKKANYLPMEACKIVEGQRYTKRLNEKQITSLLKVTCRRPREQEMDILQTVQQNGYEQDPYAKEFGINISEKLTSVEARVLPAPWLKYHDTGKEKECLPQVGQWNMVNKKVINGCKVNHWACINFSRSVQETTARGFCQELAQMCQISGMEFNSEPVIPIYSARPDQVEKALKHVYNMSLNKLKGKELELLLAILPDNNGSLYGDIKRICETDLGLISQCCLTKHVFKISKQYLANVSLKINVKMGGRNTVLLDAISWRIPLVSDIPTIIFGADVTHPETGEDSSPSIAAVVASQDWPEVTKYAGLVCAQAHRQELIQDLYKTWHDPQRGTVTGGMIRELLISFRKATGQKPLRIIFYRDGVSEGQFYQVLLYELDAIRKACASLEPNYQPPVTFVVVQKRHHTRLFANNHKDRSSTDKSGNILPGTVVDSKICHPSEFDFYLCSHAGIQGTSRPAHYHVLWDENNFTADEMQTLTNNLCYTYARCTRSVSVVPPAYYAHLAAFRARFYMEPEMSENQTTSKSSTGTNGTSVKPLPAVKEKVKRVMFYC.

Positions M1 to P95 are disordered. The segment covering A54–E67 has biased composition (low complexity). Residues G77 to G86 show a composition bias toward basic residues. In terms of domain architecture, PAZ spans P333–E446. The region spanning L620–E941 is the Piwi domain.

The protein belongs to the argonaute family. Ago subfamily.

The protein localises to the cytoplasm. Probably involved in the RNA silencing pathway. May bind to short RNAs such as microRNAs (miRNAs) or short interfering RNAs (siRNAs), and represses the translation of mRNAs which are complementary to them. Plays a role in the maintenance of the indeterminate state of the stem cells in the shoot apical meristem (SAM). Regulates leaf formation through vascular development and may be involved in determining the central domain of the leaf founder region. The polypeptide is Protein argonaute PNH1 (PHN1) (Oryza sativa subsp. japonica (Rice)).